Reading from the N-terminus, the 45-residue chain is uncharacterized protein (45 aa).

The chain crosses the membrane as a helical span at residues 15-37; the sequence is EVVGTLMAVLITFALVAVVFNFI.

It localises to the membrane. This is an uncharacterized protein from Archaeoglobus fulgidus (strain ATCC 49558 / DSM 4304 / JCM 9628 / NBRC 100126 / VC-16).